The sequence spans 159 residues: Transcriptional repressor NrdR (159 aa).

The segment at 3 to 34 (CPFCRHDDTQVVDSRVSEDGAAIRRRRRCSAC) is a zinc-finger region. In terms of domain architecture, ATP-cone spans 49–139 (PAVVKKDGSR…VYRRFEDVSE (91 aa)).

It belongs to the NrdR family. The cofactor is Zn(2+).

Its function is as follows. Negatively regulates transcription of bacterial ribonucleotide reductase nrd genes and operons by binding to NrdR-boxes. The polypeptide is Transcriptional repressor NrdR (Burkholderia pseudomallei (strain 1106a)).